The following is a 160-amino-acid chain: Transmembrane protein 191A (160 aa).

Residues 24–44 (FCFPLDFVSNLFWIFASKFII) form a helical membrane-spanning segment.

It belongs to the TMEM191 family.

It is found in the membrane. This chain is Transmembrane protein 191A (TMEM191A), found in Homo sapiens (Human).